The chain runs to 284 residues: 2-dehydro-3-deoxyphosphooctonate aldolase (284 aa).

This sequence belongs to the KdsA family.

Its subcellular location is the cytoplasm. It catalyses the reaction D-arabinose 5-phosphate + phosphoenolpyruvate + H2O = 3-deoxy-alpha-D-manno-2-octulosonate-8-phosphate + phosphate. Its pathway is carbohydrate biosynthesis; 3-deoxy-D-manno-octulosonate biosynthesis; 3-deoxy-D-manno-octulosonate from D-ribulose 5-phosphate: step 2/3. It participates in bacterial outer membrane biogenesis; lipopolysaccharide biosynthesis. This is 2-dehydro-3-deoxyphosphooctonate aldolase from Escherichia coli O6:H1 (strain CFT073 / ATCC 700928 / UPEC).